Reading from the N-terminus, the 474-residue chain is Cyclin-dependent kinase 18 (474 aa).

Phosphoserine is present on residues S14, S74, S89, S98, S117, and S132. Residues 44-87 form a disordered region; that stretch reads DLQLGPLGRDPLQECSTFSPTDSGEEPGQLSPGVQFQRRQNQRR. The 282-residue stretch at 144–425 folds into the Protein kinase domain; sequence YVKLDKLGEG…AEAALSHPYF (282 aa). Residues 150–158 and K173 contribute to the ATP site; that span reads LGEGTYATV. D265 functions as the Proton acceptor in the catalytic mechanism. 2 positions are modified to phosphoserine: S440 and S443.

It belongs to the protein kinase superfamily. CMGC Ser/Thr protein kinase family. CDC2/CDKX subfamily.

It carries out the reaction L-seryl-[protein] + ATP = O-phospho-L-seryl-[protein] + ADP + H(+). It catalyses the reaction L-threonyl-[protein] + ATP = O-phospho-L-threonyl-[protein] + ADP + H(+). Its function is as follows. May play a role in signal transduction cascades in terminally differentiated cells. This Pongo abelii (Sumatran orangutan) protein is Cyclin-dependent kinase 18 (CDK18).